The primary structure comprises 208 residues: Superoxide dismutase [Mn] 2 (208 aa).

Residues His-28, His-83, Asp-165, and His-169 each contribute to the Mn(2+) site.

Belongs to the iron/manganese superoxide dismutase family. Homodimer. It depends on Mn(2+) as a cofactor.

The catalysed reaction is 2 superoxide + 2 H(+) = H2O2 + O2. In terms of biological role, destroys superoxide anion radicals which are normally produced within the cells and which are toxic to biological systems. This chain is Superoxide dismutase [Mn] 2 (sodA2), found in Bacillus cereus (strain ATCC 14579 / DSM 31 / CCUG 7414 / JCM 2152 / NBRC 15305 / NCIMB 9373 / NCTC 2599 / NRRL B-3711).